The following is a 257-amino-acid chain: Short-chain dehydrogenase reductase 3a (257 aa).

NAD(+) is bound at residue 12–36 (IITGGASGIGAEAVRLFTDHGAKVV). A substrate-binding site is contributed by serine 144. The Proton acceptor role is filled by tyrosine 157.

The protein belongs to the short-chain dehydrogenases/reductases (SDR) family. Highly expressed in the radicle tip, lateral root primordia and tips, and the area surrounding the cotyledon hydathode of young seedlings.

Confers resistance to the incompatible pathogenic bacteria P.syringae pv. tomato DC3000 in a PR1-dependent manner. Seems not involved in abscisic acid (ABA) biosynthesis. The chain is Short-chain dehydrogenase reductase 3a (SDR3a) from Arabidopsis thaliana (Mouse-ear cress).